A 437-amino-acid chain; its full sequence is MADDPSAADRNVEIWKIKKLIKSLEAARGNGTSMISLIIPPKDQISRVAKMLADEFGTASNIKSRVNRLSVLGAITSVQQRLKLYNKVPPNGLVVYCGTIVTEEGKEKKVNIDFEPFKPINTSLYLCDNKFHTEALTALLSDDSKFGFIVIDGSGALFGTLQGNTREVLHKFTVDLPKKHGRGGQSALRFARLRMEKRHNYVRKVAETAVQLFISGDKVNVAGLVLAGSADFKTELSQSDMFDQRLQSKVLKLVDISYGGENGFNQAIELSTEVLSNVKFIQEKKLIGRYFDEISQDTGKYCFGVEDTLKALEMGAVEILIVYENLDIMRYVLHCQGTEEEKILYLTPEQEKDKSHFTDKETGQEHELIESMPLLEWFANNYKKFGATLEIVTDKSQEGSQFVKGFGGIGGILRYRVDFQGMEYQGGDDEFFDLDDY.

N-acetylalanine is present on Ala-2. The NIKS motif; plays an important role in translational termination motif lies at 61 to 64 (NIKS). Position 63 is a 4-hydroxylysine (Lys-63). A Glycyl lysine isopeptide (Lys-Gly) (interchain with G-Cter in SUMO2) cross-link involves residue Lys-87. Gln-185 is subject to N5-methylglutamine. Lys-279 is covalently cross-linked (Glycyl lysine isopeptide (Lys-Gly) (interchain with G-Cter in ubiquitin)). Thr-347 carries the post-translational modification Phosphothreonine. Lys-404 is covalently cross-linked (Glycyl lysine isopeptide (Lys-Gly) (interchain with G-Cter in SUMO2)).

It belongs to the eukaryotic release factor 1 family. Component of the eRF1-eRF3-GTP ternary complex, composed of ETF1/ERF1 and eRF3 (GSPT1/ERF3A or GSPT2/ERF3B) and GTP. Component of the transient SURF (SMG1-UPF1-eRF1-eRF3) complex. Interacts with JMJD4. The ETF1-GSPT1 complex interacts with JMJD4. In terms of processing, hydroxylation at Lys-63 by JMJD4 promotes its translational termination efficiency. Post-translationally, methylated at Gln-185 by N6AMT1. Ubiquitinated at Lys-279 via 'Lys-6'-linked polyubiquitin chains by RNF14 and RNF25 in response to ribosome collisions (ribosome stalling), leading to its degradation by the proteasome and rescue of stalled ribosomes.

It localises to the cytoplasm. Component of the eRF1-eRF3-GTP ternary complex, a ternary complex that mediates translation termination in response to the termination codons. The eRF1-eRF3-GTP complex binds to a stop codon in the ribosomal A-site. ETF1/ERF1 is responsible for stop codon recognition and inducing hydrolysis of peptidyl-tRNA. Following GTP hydrolysis, eRF3 (GSPT1/ERF3A or GSPT2/ERF3B) dissociates, permitting ETF1/eRF1 to accommodate fully in the A-site, followed by hydrolysis of peptidyl-tRNA. Component of the transient SURF complex which recruits UPF1 to stalled ribosomes in the context of nonsense-mediated decay (NMD) of mRNAs containing premature stop codons. Required for SHFL-mediated translation termination which inhibits programmed ribosomal frameshifting (-1PRF) of mRNA from viruses and cellular genes. The polypeptide is Eukaryotic peptide chain release factor subunit 1 (ETF1) (Bos taurus (Bovine)).